Reading from the N-terminus, the 131-residue chain is Small ribosomal subunit protein uS8 (131 aa).

The protein belongs to the universal ribosomal protein uS8 family. As to quaternary structure, part of the 30S ribosomal subunit. Contacts proteins S5 and S12.

Functionally, one of the primary rRNA binding proteins, it binds directly to 16S rRNA central domain where it helps coordinate assembly of the platform of the 30S subunit. This Acidovorax sp. (strain JS42) protein is Small ribosomal subunit protein uS8.